We begin with the raw amino-acid sequence, 218 residues long: Holliday junction branch migration complex subunit RuvA (218 aa).

Residues 1–64 are domain I; that stretch reads MIGKITGRLE…EDVMQLFGFT (64 aa). The segment at 65 to 143 is domain II; it reads TLTEKEWHRL…SVMGMSDTQA (79 aa). The segment at 144 to 164 is flexible linker; it reads TVAAQSSDAVIETRAAPSPVV. Residues 165–218 are domain III; sequence QNPSAQAEALSALSNLGYAPGDAAAAVAQAAGELPDAETPDLIRAALKRLAPKG.

Belongs to the RuvA family. Homotetramer. Forms an RuvA(8)-RuvB(12)-Holliday junction (HJ) complex. HJ DNA is sandwiched between 2 RuvA tetramers; dsDNA enters through RuvA and exits via RuvB. An RuvB hexamer assembles on each DNA strand where it exits the tetramer. Each RuvB hexamer is contacted by two RuvA subunits (via domain III) on 2 adjacent RuvB subunits; this complex drives branch migration. In the full resolvosome a probable DNA-RuvA(4)-RuvB(12)-RuvC(2) complex forms which resolves the HJ.

It is found in the cytoplasm. Its function is as follows. The RuvA-RuvB-RuvC complex processes Holliday junction (HJ) DNA during genetic recombination and DNA repair, while the RuvA-RuvB complex plays an important role in the rescue of blocked DNA replication forks via replication fork reversal (RFR). RuvA specifically binds to HJ cruciform DNA, conferring on it an open structure. The RuvB hexamer acts as an ATP-dependent pump, pulling dsDNA into and through the RuvAB complex. HJ branch migration allows RuvC to scan DNA until it finds its consensus sequence, where it cleaves and resolves the cruciform DNA. The polypeptide is Holliday junction branch migration complex subunit RuvA (Roseobacter denitrificans (strain ATCC 33942 / OCh 114) (Erythrobacter sp. (strain OCh 114))).